An 86-amino-acid chain; its full sequence is BolA-like protein 2 (86 aa).

N-acetylmethionine is present on Met-1.

The protein belongs to the BolA/IbaG family. As to quaternary structure, interacts with GLRX3; forms a heterotrimeric complex composed by two BOLA2 molecules and one GLRX3 molecule; linked by [2Fe-2S] clusters.

The protein resides in the cytoplasm. It localises to the nucleus. Functionally, acts as a cytosolic iron-sulfur (Fe-S) cluster assembly factor that facilitates [2Fe-2S] cluster insertion into a subset of cytosolic proteins. Acts together with the monothiol glutaredoxin GLRX3. In Mus musculus (Mouse), this protein is BolA-like protein 2 (Bola2).